We begin with the raw amino-acid sequence, 479 residues long: Replication factor C large subunit (479 aa).

Gly-56–Thr-63 contributes to the ATP binding site. The span at Leu-435–Lys-461 shows a compositional bias: basic and acidic residues. Positions Leu-435–Gln-479 are disordered.

The protein belongs to the activator 1 small subunits family. RfcL subfamily. In terms of assembly, heteromultimer composed of small subunits (RfcS) and large subunits (RfcL).

Functionally, part of the RFC clamp loader complex which loads the PCNA sliding clamp onto DNA. This chain is Replication factor C large subunit, found in Aeropyrum pernix (strain ATCC 700893 / DSM 11879 / JCM 9820 / NBRC 100138 / K1).